A 55-amino-acid chain; its full sequence is MAKGAREKIKLESTAGTGHFYTTTKNKKTTPDKMLIMKFDPKARKHVEYKEIKLK.

Belongs to the bacterial ribosomal protein bL33 family.

The sequence is that of Large ribosomal subunit protein bL33 from Polaromonas sp. (strain JS666 / ATCC BAA-500).